The following is a 247-amino-acid chain: Probable transcriptional regulatory protein plu2109 (247 aa).

The protein belongs to the TACO1 family.

The protein resides in the cytoplasm. The sequence is that of Probable transcriptional regulatory protein plu2109 from Photorhabdus laumondii subsp. laumondii (strain DSM 15139 / CIP 105565 / TT01) (Photorhabdus luminescens subsp. laumondii).